Consider the following 192-residue polypeptide: Peptidyl-tRNA hydrolase (192 aa).

A tRNA-binding site is contributed by tyrosine 17. Histidine 22 acts as the Proton acceptor in catalysis. The tRNA site is built by tyrosine 68, asparagine 70, and asparagine 116.

Belongs to the PTH family. In terms of assembly, monomer.

It is found in the cytoplasm. The enzyme catalyses an N-acyl-L-alpha-aminoacyl-tRNA + H2O = an N-acyl-L-amino acid + a tRNA + H(+). Its function is as follows. Hydrolyzes ribosome-free peptidyl-tRNAs (with 1 or more amino acids incorporated), which drop off the ribosome during protein synthesis, or as a result of ribosome stalling. Catalyzes the release of premature peptidyl moieties from peptidyl-tRNA molecules trapped in stalled 50S ribosomal subunits, and thus maintains levels of free tRNAs and 50S ribosomes. The sequence is that of Peptidyl-tRNA hydrolase from Mycolicibacterium gilvum (strain PYR-GCK) (Mycobacterium gilvum (strain PYR-GCK)).